Here is a 207-residue protein sequence, read N- to C-terminus: Outer-membrane lipoprotein LolB (207 aa).

Positions 1 to 21 are cleaved as a signal peptide; that stretch reads MPIRKVSLLRLIPLASLVLAA. Cys22 is lipidated: N-palmitoyl cysteine. The S-diacylglycerol cysteine moiety is linked to residue Cys22.

It belongs to the LolB family. As to quaternary structure, monomer.

The protein resides in the cell outer membrane. Functionally, plays a critical role in the incorporation of lipoproteins in the outer membrane after they are released by the LolA protein. The polypeptide is Outer-membrane lipoprotein LolB (Serratia proteamaculans (strain 568)).